A 459-amino-acid polypeptide reads, in one-letter code: Cysteine--tRNA ligase (459 aa).

Residue C28 coordinates Zn(2+). The 'HIGH' region motif lies at 30–40 (VTVYDLCHIGH). Zn(2+)-binding residues include C209, H234, and E238. The 'KMSKS' region signature appears at 266 to 270 (KMSKS). K269 is a binding site for ATP.

The protein belongs to the class-I aminoacyl-tRNA synthetase family. Monomer. It depends on Zn(2+) as a cofactor.

The protein localises to the cytoplasm. The catalysed reaction is tRNA(Cys) + L-cysteine + ATP = L-cysteinyl-tRNA(Cys) + AMP + diphosphate. The protein is Cysteine--tRNA ligase of Histophilus somni (strain 129Pt) (Haemophilus somnus).